A 329-amino-acid chain; its full sequence is tRNA(Ile)-lysidine synthase, chloroplastic (329 aa).

32–37 (SGGQDS) provides a ligand contact to ATP.

It belongs to the tRNA(Ile)-lysidine synthase family.

It localises to the plastid. The protein resides in the chloroplast. The enzyme catalyses cytidine(34) in tRNA(Ile2) + L-lysine + ATP = lysidine(34) in tRNA(Ile2) + AMP + diphosphate + H(+). In terms of biological role, ligates lysine onto the cytidine present at position 34 of the AUA codon-specific tRNA(Ile) that contains the anticodon CAU, in an ATP-dependent manner. Cytidine is converted to lysidine, thus changing the amino acid specificity of the tRNA from methionine to isoleucine. This Pyropia yezoensis (Susabi-nori) protein is tRNA(Ile)-lysidine synthase, chloroplastic.